Reading from the N-terminus, the 708-residue chain is Radial spoke head protein 6 homolog A (708 aa).

Disordered stretches follow at residues 1-94, 376-407, 495-514, and 663-708; these read MGEP…GYTP, ETHG…IIPK, EEEG…FEEN, and GPEI…DLED. Over residues 10 to 32 the composition is skewed to polar residues; it reads PSQTRRASQGSERARSQEYSQPL. Residues 47-56 show a composition bias toward low complexity; the sequence is RGSRSSQGSQ. Over residues 495-504 the composition is skewed to acidic residues; sequence EEEGDEEEEG. A compositionally biased stretch (low complexity) spans 680 to 690; sequence LKAAQEQALAA. Residues 691 to 708 show a composition bias toward acidic residues; the sequence is AEEEEEDEEEEEDEDLED.

It belongs to the flagellar radial spoke RSP4/6 family. As to quaternary structure, component of the axonemal radial spoke 1 (RS1) and 2 (RS2) complexes, at least composed of spoke head proteins RSPH1, RSPH3, RSPH9 and the cilia-specific component RSPH4A or sperm-specific component RSPH6A, spoke stalk proteins RSPH14, DNAJB13, DYDC1, ROPN1L and NME5, and the RS1 complex-specific anchor protein IQUB. Interacts with RSPH1. Interacts with RSPH3B. Interacts with RSPH4A. Interacts with RSPH9. Interacts with RSPH10B. Post-translationally, phosphorylated by PKA. Phosphorylation increases in capacitated sperm. Expressed in sperm and testis (at protein level).

Its subcellular location is the cytoplasm. It is found in the cytoskeleton. The protein localises to the flagellum axoneme. In terms of biological role, functions as part of radial spoke complexes in the axoneme of sperm flagella that play an important part in motility. The triple radial spokes (RS1, RS2 and RS3) are required to modulate beating of the sperm flagellum. The chain is Radial spoke head protein 6 homolog A from Mus musculus (Mouse).